We begin with the raw amino-acid sequence, 409 residues long: Histidinol dehydrogenase homolog (409 aa).

Belongs to the histidinol dehydrogenase family.

The sequence is that of Histidinol dehydrogenase homolog from Synechocystis sp. (strain ATCC 27184 / PCC 6803 / Kazusa).